Here is a 528-residue protein sequence, read N- to C-terminus: Glutamyl-tRNA(Gln) amidotransferase subunit B, mitochondrial (528 aa).

The protein belongs to the GatB/GatE family. GatB subfamily. Subunit of the heterotrimeric GatFAB amidotransferase (AdT) complex, composed of A, B and F subunits.

The protein resides in the mitochondrion. It catalyses the reaction L-glutamyl-tRNA(Gln) + L-glutamine + ATP + H2O = L-glutaminyl-tRNA(Gln) + L-glutamate + ADP + phosphate + H(+). Its function is as follows. Allows the formation of correctly charged Gln-tRNA(Gln) through the transamidation of misacylated Glu-tRNA(Gln) in the mitochondria. The reaction takes place in the presence of glutamine and ATP through an activated gamma-phospho-Glu-tRNA(Gln). In Clavispora lusitaniae (strain ATCC 42720) (Yeast), this protein is Glutamyl-tRNA(Gln) amidotransferase subunit B, mitochondrial.